The following is a 584-amino-acid chain: High-affinity choline transporter 1 (584 aa).

Residues 1–6 (MTVHID) are Extracellular-facing. A helical transmembrane segment spans residues 7-27 (GIVAIVLFYLLILFVGLWAAW). Over 28–50 (KSKNTSMEGAMDRSEAIMIGGRD) the chain is Cytoplasmic. The helical transmembrane segment at 51–71 (IGLLVGGFTMTATWVGGGYIN) threads the bilayer. Topologically, residues 72-83 (GTAEAVYVPGYG) are extracellular. Residues 84 to 104 (LAWAQAPFGYALSLVIGGLFF) form a helical membrane-spanning segment. Topologically, residues 105–127 (AKPMRSRGYVTMLDPFQQMYGKR) are cytoplasmic. Residues 128 to 148 (MGGLLFIPALLGEIFWSAAIL) form a helical membrane-spanning segment. Residues 149 to 166 (SALGATLSVIVDININVS) are Extracellular-facing. A helical membrane pass occupies residues 167–187 (VVVSAVIAVLYTLVGGLYSVA). The Cytoplasmic portion of the chain corresponds to 188–193 (YTDVVQ). A helical membrane pass occupies residues 194 to 214 (LFCIFLGLWISIPFALLNPAV). Residues 215-239 (TDIIVTANQEVYQEPWVGNIQSKDS) lie on the Extracellular side of the membrane. A helical transmembrane segment spans residues 240–260 (LIWIDNFLLLMLGGIPWQVYF). Topologically, residues 261–276 (QRVLSASSATYAQVLS) are cytoplasmic. The helical transmembrane segment at 277-297 (FLAAFGCVLMAIPSVLIGAIG) threads the bilayer. Over 298–319 (TSTDWNQTSYGLPGPIGKNETD) the chain is Extracellular. N-linked (GlcNAc...) asparagine glycosylation occurs at Asn303. The chain crosses the membrane as a helical span at residues 320–340 (MILPIVLQHLCPPYISFFGLG). Residues 341–378 (AVSAAVMSSADSSILSASSMFARNIYHLAFRQEASDKE) lie on the Cytoplasmic side of the membrane. The helical transmembrane segment at 379-399 (IVWVMRITIFLFGGAATSMAL) threads the bilayer. Over 400-408 (LAQSIYGLW) the chain is Extracellular. The helical transmembrane segment at 409–429 (YLSSDLVYVIIFPQLISVLFV) threads the bilayer. Residues 430–437 (KGTNTYGS) lie on the Cytoplasmic side of the membrane. A helical membrane pass occupies residues 438–458 (IAGYIIGFLLRISGGEPYLHM). Over 459–487 (QPFIYYPGCYLDHSFGDDPVYVQRFPFKT) the chain is Extracellular. Residues 488–508 (MAMLFSFLGNTGVSYLVKYLF) traverse the membrane as a helical segment. At 509–584 (VSGILPPKLD…NPELSKSGND (76 aa)) the chain is on the cytoplasmic side.

The protein belongs to the sodium:solute symporter (SSF) (TC 2.A.21) family. In terms of processing, phosphorylated. Specific for cholinergic neurons.

It localises to the membrane. Imports choline from the extracellular space to the neuron with high affinity. Rate-limiting step in acetylcholine synthesis. Sodium ion and chloride ion dependent. The chain is High-affinity choline transporter 1 (CHT1) from Torpedo marmorata (Marbled electric ray).